A 626-amino-acid polypeptide reads, in one-letter code: MSETVERHEFGAEVGRLLDLVVHALYSDREIFLRELVANAADATDRRRFEALTNEALALPSDARVLIAPDKAARTLTISDAGIGMSKEDLAQNLGTIARSGTRAFSQALGERAAEGGEDQRPSLIGQFGVGFYSAFMVADRVTVTSRRAGSEEAWTWASDGKGSYTLEPASREQPGTDIVLHMKEDADEYLESYRLDHVVRKWADNIAVPIAIRDAEGKEEAANRGTALWRKPKSEITEEQYKEFYRTVSHGFDEPWATLHWRAEGALEFTGLLFVPSMKPFMPMEDDRRSKVRLHVRRMFITDEAELLPNWLRFVHGVVDTDDLPLNVSREMLQSTPTLQKIRRAVTTRVINELSSRSKNAEKAEEYQKFFENFGPVLKEGIYEDFERRGEIAPLLRFRSSTEGGWTSLPEYVARMKPEQEAIYYLVADDVEALKNSAQLEGFRARGVEVLLLSDHVDAFWPEQLGKFEDKPLRSVTQGSADLAKLKPEGETAEAAPALDTLVAALKLALEPDVSDVRTTDRLVDSAVVLATSGMGPDLQMQRLLRRAGRGFGGSAPILEINPRHALIRSLNERAEAGEDLKAEAGTLLDLARVQDGDTPRDPVAFARAVAAALAGTAAKPAESA.

An a; substrate-binding region spans residues Met-1–Arg-331. Positions Glu-332–Arg-544 are b. The tract at residues Leu-545–Ala-626 is c.

This sequence belongs to the heat shock protein 90 family. As to quaternary structure, homodimer.

Its subcellular location is the cytoplasm. Functionally, molecular chaperone. Has ATPase activity. The chain is Chaperone protein HtpG from Methylorubrum extorquens (strain PA1) (Methylobacterium extorquens).